The chain runs to 243 residues: Carboxy-S-adenosyl-L-methionine synthase (243 aa).

S-adenosyl-L-methionine contacts are provided by residues tyrosine 40, 65–67 (GCS), 90–91 (DN), 118–119 (DI), asparagine 133, and arginine 200.

It belongs to the class I-like SAM-binding methyltransferase superfamily. Cx-SAM synthase family. In terms of assembly, homodimer.

The catalysed reaction is prephenate + S-adenosyl-L-methionine = carboxy-S-adenosyl-L-methionine + 3-phenylpyruvate + H2O. Functionally, catalyzes the conversion of S-adenosyl-L-methionine (SAM) to carboxy-S-adenosyl-L-methionine (Cx-SAM). The protein is Carboxy-S-adenosyl-L-methionine synthase of Shewanella sp. (strain W3-18-1).